Here is a 327-residue protein sequence, read N- to C-terminus: GMP reductase (327 aa).

Cys176 (thioimidate intermediate) is an active-site residue. 205–228 (IIADGGIRTHGDIAKSIRFGASMV) serves as a coordination point for NADP(+).

Belongs to the IMPDH/GMPR family. GuaC type 2 subfamily.

It carries out the reaction IMP + NH4(+) + NADP(+) = GMP + NADPH + 2 H(+). Functionally, catalyzes the irreversible NADPH-dependent deamination of GMP to IMP. It functions in the conversion of nucleobase, nucleoside and nucleotide derivatives of G to A nucleotides, and in maintaining the intracellular balance of A and G nucleotides. This is GMP reductase from Streptococcus gordonii (strain Challis / ATCC 35105 / BCRC 15272 / CH1 / DL1 / V288).